Reading from the N-terminus, the 151-residue chain is 6,7-dimethyl-8-ribityllumazine synthase (151 aa).

Residues F15, 49 to 51 (AVE), and 73 to 75 (AVI) each bind 5-amino-6-(D-ribitylamino)uracil. 78-79 (ET) contributes to the (2S)-2-hydroxy-3-oxobutyl phosphate binding site. Residue H81 is the Proton donor of the active site. 5-amino-6-(D-ribitylamino)uracil is bound at residue F106. Residue R120 coordinates (2S)-2-hydroxy-3-oxobutyl phosphate.

It belongs to the DMRL synthase family. In terms of assembly, forms an icosahedral capsid composed of 60 subunits, arranged as a dodecamer of pentamers.

It catalyses the reaction (2S)-2-hydroxy-3-oxobutyl phosphate + 5-amino-6-(D-ribitylamino)uracil = 6,7-dimethyl-8-(1-D-ribityl)lumazine + phosphate + 2 H2O + H(+). Its pathway is cofactor biosynthesis; riboflavin biosynthesis; riboflavin from 2-hydroxy-3-oxobutyl phosphate and 5-amino-6-(D-ribitylamino)uracil: step 1/2. Its function is as follows. Catalyzes the formation of 6,7-dimethyl-8-ribityllumazine by condensation of 5-amino-6-(D-ribitylamino)uracil with 3,4-dihydroxy-2-butanone 4-phosphate. This is the penultimate step in the biosynthesis of riboflavin. The protein is 6,7-dimethyl-8-ribityllumazine synthase of Coxiella burnetii (strain Dugway 5J108-111).